The primary structure comprises 185 residues: Neuronal vesicle trafficking-associated protein 1 (185 aa).

Residues 1–82 (MVKLGNNFSE…ITEGVSERFK (82 aa)) lie on the Cytoplasmic side of the membrane. Residues 83 to 103 (VTVLVLFALAFLTCVVFLVVY) traverse the membrane as a helical; Signal-anchor for type II membrane protein segment. The Lumenal segment spans residues 104–185 (KVYKYDHTCP…QETEAAEKSA (82 aa)).

Belongs to the NSG family.

It is found in the membrane. Its subcellular location is the golgi apparatus. The protein resides in the trans-Golgi network membrane. It localises to the endosome membrane. The protein localises to the cell projection. It is found in the dendrite. Its subcellular location is the early endosome membrane. The protein resides in the late endosome membrane. It localises to the lysosome lumen. The protein localises to the recycling endosome membrane. It is found in the cytoplasmic vesicle membrane. Its subcellular location is the golgi stack membrane. The protein resides in the endosome. It localises to the multivesicular body membrane. Plays a role in the recycling mechanism in neurons of multiple receptors and acts at the level of early endosomes to promote sorting of receptors toward a recycling pathway. The polypeptide is Neuronal vesicle trafficking-associated protein 1 (Gallus gallus (Chicken)).